A 516-amino-acid polypeptide reads, in one-letter code: Gamma-aminobutyrate transaminase 1, mitochondrial (516 aa).

The N-terminal 47 residues, 1 to 47 (MVIARGLLRSNASSSSSQAINLLKYVTSTGSLQGHTQNLCDASTRHF), are a transit peptide targeting the mitochondrion. Positions 45–60 (RHFSSVPSPQSNSTEE) are enriched in polar residues. Residues 45-64 (RHFSSVPSPQSNSTEENGFK) form a disordered region. 171-172 (GS) provides a ligand contact to pyridoxal 5'-phosphate. Tyrosine 204 is a substrate binding site. A pyridoxal 5'-phosphate-binding site is contributed by aspartate 311. Lysine 340 is a binding site for substrate. Lysine 340 is subject to N6-(pyridoxal phosphate)lysine.

Belongs to the class-III pyridoxal-phosphate-dependent aminotransferase family.

It is found in the mitochondrion. The catalysed reaction is 4-aminobutanoate + pyruvate = succinate semialdehyde + L-alanine. It catalyses the reaction 4-aminobutanoate + glyoxylate = succinate semialdehyde + glycine. In terms of biological role, transaminase that degrades gamma-amino butyric acid (GABA) and uses pyruvate as amino-group acceptor, but not 2-oxoglutarate. In Oryza sativa subsp. indica (Rice), this protein is Gamma-aminobutyrate transaminase 1, mitochondrial.